We begin with the raw amino-acid sequence, 414 residues long: 3-phosphoshikimate 1-carboxyvinyltransferase (414 aa).

Lys20, Ser21, and Arg25 together coordinate 3-phosphoshikimate. Lys20 contacts phosphoenolpyruvate. Residues Gly85 and Arg113 each contribute to the phosphoenolpyruvate site. The 3-phosphoshikimate site is built by Ser154, Ser155, Gln156, Ser181, Asp296, and Lys323. Gln156 serves as a coordination point for phosphoenolpyruvate. Catalysis depends on Asp296, which acts as the Proton acceptor. The phosphoenolpyruvate site is built by Arg327, Arg371, and Lys395.

Belongs to the EPSP synthase family. Monomer.

It localises to the cytoplasm. It carries out the reaction 3-phosphoshikimate + phosphoenolpyruvate = 5-O-(1-carboxyvinyl)-3-phosphoshikimate + phosphate. Its pathway is metabolic intermediate biosynthesis; chorismate biosynthesis. Catalyzes the transfer of the enolpyruvyl moiety of phosphoenolpyruvate (PEP) to the 5-hydroxyl of shikimate-3-phosphate (S3P) to produce enolpyruvyl shikimate-3-phosphate and inorganic phosphate. This Saccharolobus islandicus (strain M.14.25 / Kamchatka #1) (Sulfolobus islandicus) protein is 3-phosphoshikimate 1-carboxyvinyltransferase.